We begin with the raw amino-acid sequence, 364 residues long: Phosphoserine aminotransferase (364 aa).

Arginine 41 serves as a coordination point for L-glutamate. Residues 75 to 76 (AS), tryptophan 100, threonine 155, aspartate 175, and glutamine 198 each bind pyridoxal 5'-phosphate. Residue lysine 199 is modified to N6-(pyridoxal phosphate)lysine. 239–240 (NT) contributes to the pyridoxal 5'-phosphate binding site.

This sequence belongs to the class-V pyridoxal-phosphate-dependent aminotransferase family. SerC subfamily. In terms of assembly, homodimer. Requires pyridoxal 5'-phosphate as cofactor.

The protein resides in the cytoplasm. The enzyme catalyses O-phospho-L-serine + 2-oxoglutarate = 3-phosphooxypyruvate + L-glutamate. The catalysed reaction is 4-(phosphooxy)-L-threonine + 2-oxoglutarate = (R)-3-hydroxy-2-oxo-4-phosphooxybutanoate + L-glutamate. Its pathway is amino-acid biosynthesis; L-serine biosynthesis; L-serine from 3-phospho-D-glycerate: step 2/3. Catalyzes the reversible conversion of 3-phosphohydroxypyruvate to phosphoserine and of 3-hydroxy-2-oxo-4-phosphonooxybutanoate to phosphohydroxythreonine. This Streptococcus thermophilus (strain CNRZ 1066) protein is Phosphoserine aminotransferase.